The sequence spans 57 residues: MKISFLLLALVICSIGWSEAQFTDVKCTGSKQCWPVCKQMFGKPNGKCMNGKCRCYS.

The signal sequence occupies residues 1-20 (MKISFLLLALVICSIGWSEA). Glutamine 21 carries the post-translational modification Pyrrolidone carboxylic acid. 3 disulfides stabilise this stretch: cysteine 27–cysteine 48, cysteine 33–cysteine 53, and cysteine 37–cysteine 55.

Belongs to the short scorpion toxin superfamily. Potassium channel inhibitor family. Alpha-KTx 01 subfamily. As to expression, expressed by the venom gland.

It is found in the secreted. Its function is as follows. Potent blocker of both large-conductance calcium-activated potassium channels (KCa1.1/KCNMA1) and voltage-gated potassium channels (Kv1.3/KCNA3). Has also been shown to moderately inhibit Kv1.2/KCNA2 and weakly inhibit Kv1.1/KCNA1 channels, as well as 5-hydroxytryptamine 3 receptors (HTR3A). In Olivierus martensii (Manchurian scorpion), this protein is Potassium channel toxin alpha-KTx 1.5.